A 76-amino-acid polypeptide reads, in one-letter code: DNA-directed RNA polymerase subunit omega (76 aa).

The protein belongs to the RNA polymerase subunit omega family. In cyanobacteria the RNAP catalytic core is composed of 2 alpha, 1 beta, 1 beta', 1 gamma and 1 omega subunit. When a sigma factor is associated with the core the holoenzyme is formed, which can initiate transcription.

The enzyme catalyses RNA(n) + a ribonucleoside 5'-triphosphate = RNA(n+1) + diphosphate. In terms of biological role, promotes RNA polymerase assembly. Latches the N- and C-terminal regions of the beta' subunit thereby facilitating its interaction with the beta and alpha subunits. This chain is DNA-directed RNA polymerase subunit omega, found in Synechococcus elongatus (strain ATCC 33912 / PCC 7942 / FACHB-805) (Anacystis nidulans R2).